Reading from the N-terminus, the 280-residue chain is Elongation factor Ts (280 aa).

An involved in Mg(2+) ion dislocation from EF-Tu region spans residues 79-82 (TDFV).

Belongs to the EF-Ts family.

The protein localises to the cytoplasm. Associates with the EF-Tu.GDP complex and induces the exchange of GDP to GTP. It remains bound to the aminoacyl-tRNA.EF-Tu.GTP complex up to the GTP hydrolysis stage on the ribosome. This Vibrio vulnificus (strain CMCP6) protein is Elongation factor Ts.